The primary structure comprises 117 residues: MDGSTIVFILTMVCLFVYTVKHRGAKQVPSRTVQDAKPAPSVATNDPSPEPVPSAPEERVARLNRHGSDRKRAVNSDMVEIVMTMAPHVPQEKVVQDLRNTGSIEHTMENIFAGKLD.

Positions 27 to 74 (QVPSRTVQDAKPAPSVATNDPSPEPVPSAPEERVARLNRHGSDRKRAV) are disordered. Lys37 is covalently cross-linked (Glycyl lysine isopeptide (Lys-Gly) (interchain with G-Cter in ubiquitin)). Ser48 carries the post-translational modification Phosphoserine. The span at 56–74 (PEERVARLNRHGSDRKRAV) shows a compositional bias: basic and acidic residues. In terms of domain architecture, CUE spans 74 to 116 (VNSDMVEIVMTMAPHVPQEKVVQDLRNTGSIEHTMENIFAGKL).

Ubiquitinated.

Its subcellular location is the cytoplasm. It is found in the endoplasmic reticulum. The protein is CUE domain-containing protein CUE4 (CUE4) of Saccharomyces cerevisiae (strain ATCC 204508 / S288c) (Baker's yeast).